A 198-amino-acid chain; its full sequence is Na(+)-translocating NADH-quinone reductase subunit E (198 aa).

6 consecutive transmembrane segments (helical) span residues 11–31, 39–59, 77–97, 110–130, 140–160, and 176–196; these read SIFI…FLAV, FGLG…NNLV, FLNF…LEMV, GIFL…SFMV, IVYG…LAGI, and LGIT…FSGV.

This sequence belongs to the NqrDE/RnfAE family. In terms of assembly, composed of six subunits; NqrA, NqrB, NqrC, NqrD, NqrE and NqrF.

The protein resides in the cell inner membrane. The catalysed reaction is a ubiquinone + n Na(+)(in) + NADH + H(+) = a ubiquinol + n Na(+)(out) + NAD(+). NQR complex catalyzes the reduction of ubiquinone-1 to ubiquinol by two successive reactions, coupled with the transport of Na(+) ions from the cytoplasm to the periplasm. NqrA to NqrE are probably involved in the second step, the conversion of ubisemiquinone to ubiquinol. This chain is Na(+)-translocating NADH-quinone reductase subunit E, found in Aliivibrio salmonicida (strain LFI1238) (Vibrio salmonicida (strain LFI1238)).